The sequence spans 76 residues: DNA-directed RNA polymerase subunit epsilon (76 aa).

The protein belongs to the RNA polymerase subunit epsilon family. As to quaternary structure, RNAP is composed of a core of 2 alpha, a beta and a beta' subunit. The core is associated with a delta subunit, and at least one of epsilon or omega. When a sigma factor is associated with the core the holoenzyme is formed, which can initiate transcription.

It carries out the reaction RNA(n) + a ribonucleoside 5'-triphosphate = RNA(n+1) + diphosphate. A non-essential component of RNA polymerase (RNAP). The polypeptide is DNA-directed RNA polymerase subunit epsilon (Streptococcus thermophilus (strain CNRZ 1066)).